The following is a 765-amino-acid chain: Zinc transporter ZIP6 (765 aa).

The N-terminal stretch at 1-20 (MATDLSVIMILTFALWVTSP) is a signal peptide. The Extracellular portion of the chain corresponds to 21–335 (LHELQSTAAF…PKTYSLQIAW (315 aa)). A glycan (N-linked (GlcNAc...) asparagine) is linked at Asn68. Basic and acidic residues-rich tracts occupy residues 96 to 135 (DHEHHADHEHHSDHEHHSDHEHHSDHEHHSDHEHHSDHEH) and 174 to 186 (RPAEHMNGRRNIK). 2 disordered regions span residues 96–196 (DHEH…EVTS) and 209–257 (VETI…SEPR). The span at 187–196 (ESASSSEVTS) shows a compositional bias: low complexity. A compositionally biased stretch (polar residues) spans 224 to 233 (VNPSTPPSIT). Positions 238-247 (VGRLSRLARK) are enriched in basic residues. Over residues 248 to 257 (KSNESVSEPR) the composition is skewed to basic and acidic residues. 3 N-linked (GlcNAc...) asparagine glycosylation sites follow: Asn250, Asn275, and Asn292. A helical membrane pass occupies residues 336–356 (LGGFIAISIISFLSLLGVILV). The Cytoplasmic portion of the chain corresponds to 357 to 365 (PLMNRVFFK). Residues 366 to 386 (FLLSFLVALAVGTLSGDALLH) traverse the membrane as a helical segment. Residues 387–433 (LLPHSHASHQHSHSHEEPAMEMKRGPLFSHLSAQNIEESSYFDSTWK) lie on the Extracellular side of the membrane. A helical transmembrane segment spans residues 434-454 (GLTALGGLYFMFLVEHVLTLI). Over 455–667 (KQFKDKKKKN…LKAGMTVKQA (213 aa)) the chain is Cytoplasmic. The interval 458-519 (KDKKKKNQKK…EPSPFDSQQP (62 aa)) is disordered. A coiled-coil region spans residues 475–495 (ESKKQLSKYDSQLSSNEEKVD). 2 positions are modified to phosphoserine: Ser481 and Ser488. Residues 490 to 508 (NEEKVDPGERPESYLRADS) show a composition bias toward basic and acidic residues. The span at 509–519 (QEPSPFDSQQP) shows a compositional bias: polar residues. Residues 668–688 (VLYNALSAMLAYLGMATGIFI) traverse the membrane as a helical segment. Residues 689 to 696 (GHYAENVS) lie on the Extracellular side of the membrane. Asn694 carries an N-linked (GlcNAc...) asparagine glycan. A helical transmembrane segment spans residues 697–717 (MWIFALTAGLFMYVALVDMVP). The Cytoplasmic segment spans residues 718 to 734 (EMLHNDASDHGCSRWGY). Residues 735 to 755 (FFLQNAGILLGFGIMLLISIF) form a helical membrane-spanning segment. The Extracellular segment spans residues 756–765 (EHKIVFRINF).

This sequence belongs to the ZIP transporter (TC 2.A.5) family. As to quaternary structure, interacts with SLC39A10; which triggers cells to undergo EMT and mitosis. Found in a complex with SLC39A6, SLC39A10 and with the 'Ser-727' phosphorylated form of STAT3 throughout mitosis. Found in a complex with SLC39A6, SLC39A10 and with NCAM1; this complex controls NCAM1 phosphorylation and integration into focal adhesion complexes during epithelial-to-mesenchymal transition (EMT). Found in a complex with SLC39A6, SLC39A10 and with GSK3B that controls NCAM1 phosphorylation. Cleaved on the N-terminus before locating to the plasma membrane. Post-translationally, N-glycosylated. In terms of processing, phosphorylated by ZAP70 in response to TCR stimulation leading to its activation. In terms of tissue distribution, highly expressed in the brain and testis. In the brain strongly expressed in the CA1 and CA3 regions, Purkinje cells in cerebellum and dentate gyrus in hippocampus. In testis found in spermatids or mature sperms in the central areas of seminiferous tubules.

The protein localises to the cell membrane. It is found in the cell projection. Its subcellular location is the lamellipodium membrane. It localises to the membrane raft. The protein resides in the apical cell membrane. It carries out the reaction Zn(2+)(in) = Zn(2+)(out). Functionally, zinc-influx transporter which plays a role in zinc homeostasis and in the induction of epithelial-to-mesenchymal transition (EMT). When associated with SLC39A10, the heterodimer formed by SLC39A10 and SLC39A6 mediates cellular zinc uptake to trigger cells to undergo epithelial- to-mesenchymal transition (EMT). The SLC39A10-SLC39A6 heterodimer also controls NCAM1 phosphorylation and its integration into focal adhesion complexes during EMT. Zinc influx inactivates GSK3B, enabling unphosphorylated SNAI1 in the nucleus to down-regulate adherence genes such as E-cadherin, causing loss of cell adherence. In addition, the SLC39A10-SLC39A6 heterodimer plays an essentiel role in initiating mitosis by importing zinc into cells to initiate a pathway resulting in the onset of mitosis. Participates in the T-cell receptor signaling regulation by mediating cellular zinc uptake into activated lymphocytes. Regulates the zinc influx necessary for proper meiotic progression to metaphase II (MII) that allows the oocyte-to-egg transition. This Mus musculus (Mouse) protein is Zinc transporter ZIP6.